An 87-amino-acid polypeptide reads, in one-letter code: Small ribosomal subunit protein bS20 (87 aa).

A disordered region spans residues M1–S26.

This sequence belongs to the bacterial ribosomal protein bS20 family.

Binds directly to 16S ribosomal RNA. The sequence is that of Small ribosomal subunit protein bS20 from Photorhabdus laumondii subsp. laumondii (strain DSM 15139 / CIP 105565 / TT01) (Photorhabdus luminescens subsp. laumondii).